The following is a 323-amino-acid chain: MDDRVHPEVRRTATEIDTMEIRGAATIADAAARALRTQATESDAADAEAFRAELRATARTLHETRPTAVSLPNALRYVLRDMSSTTVEGLRQSVVDSADEFCARLERAQADLGQVGANRLRDGDTIMTHCHSTDALACVEAAVEQGKHIEAVVKETRPRNQGHITAKRLHELGVPVTLIVDSAARRYLNDVDHVLVGADAVAADGSVINKIGTSGLAVNARERGTPIMVAAQTLKLHPGTMTGHTVDIEMRDTAEVVDDDTLADLGNPTVKNPAFDVTPPRYVDAIVTERGQFPPESIVILMRELFGEGTSEPWAEPSPRAEP.

Substrate is bound by residues 22–25 (RGAA) and R65. C130 acts as the Proton acceptor in catalysis. D199 acts as the Proton donor in catalysis. Residues 209–210 (NK) and K235 contribute to the substrate site. K210 is covalently cross-linked (Glycyl lysine isopeptide (Lys-Gly) (interchain with G-Cter in SAMP2)).

The protein belongs to the eIF-2B alpha/beta/delta subunits family. R15P isomerase subfamily.

It carries out the reaction alpha-D-ribose 1,5-bisphosphate = D-ribulose 1,5-bisphosphate. Functionally, catalyzes the isomerization of ribose 1,5-bisphosphate (R15P) to ribulose 1,5-bisphosphate (RuBP), the CO(2) acceptor and substrate for RubisCO. Functions in an archaeal AMP degradation pathway, together with AMP phosphorylase and RubisCO. The chain is Ribose 1,5-bisphosphate isomerase from Haloferax volcanii (strain ATCC 29605 / DSM 3757 / JCM 8879 / NBRC 14742 / NCIMB 2012 / VKM B-1768 / DS2) (Halobacterium volcanii).